We begin with the raw amino-acid sequence, 207 residues long: Ion-translocating oxidoreductase complex subunit G (207 aa).

A helical membrane pass occupies residues 11–31; the sequence is GILLGFIALLCTIISAGIFFL. Thr-175 bears the FMN phosphoryl threonine mark.

Belongs to the RnfG family. In terms of assembly, the complex is composed of six subunits: RnfA, RnfB, RnfC, RnfD, RnfE and RnfG. FMN serves as cofactor.

The protein localises to the cell inner membrane. Part of a membrane-bound complex that couples electron transfer with translocation of ions across the membrane. The chain is Ion-translocating oxidoreductase complex subunit G from Haemophilus influenzae (strain ATCC 51907 / DSM 11121 / KW20 / Rd).